Here is a 90-residue protein sequence, read N- to C-terminus: DNA-binding protein HU (90 aa).

The protein belongs to the bacterial histone-like protein family. As to quaternary structure, homodimer.

Functionally, histone-like DNA-binding protein which is capable of wrapping DNA to stabilize it, and thus to prevent its denaturation under extreme environmental conditions. In Haemophilus influenzae (strain ATCC 51907 / DSM 11121 / KW20 / Rd), this protein is DNA-binding protein HU (hup).